The chain runs to 400 residues: MKLKTLSVGEVNNYVKKLVENDFILKNLNVKGEISNLKFHSSGHIYFSLKDENSKVNCIMFKNNAVNLDFRLEEGMKVEIKARLGVYHKEGTYQLYCENIKKAGIGELFEEFHKLKKELSEEGIFDEKYKRALPKFPKRIGIITAKTGAAVRDIINVIQRRNKSLDIILYPAKVQGENAADSIIEGIRYFNNEKSVDVIILGRGGGFIEELWAFNNRDLAYEIFNSRIPTVSAVGHEVDFTISDFVSDMRAPTPSAAGELVSPSLQEMINDLLNKKEFLHRAIDRKFLNAKRDVDLLYKGLKGNNPKDIIEKRIKEVNSLEEKLNFLGKRKIDKAKDELIALNSILQTLNPLNTLGRGYSVIMDKEDKVINNVSELKKNDMVKVIMKDGSVNIDIKIINE.

This sequence belongs to the XseA family. Heterooligomer composed of large and small subunits.

It is found in the cytoplasm. The enzyme catalyses Exonucleolytic cleavage in either 5'- to 3'- or 3'- to 5'-direction to yield nucleoside 5'-phosphates.. Its function is as follows. Bidirectionally degrades single-stranded DNA into large acid-insoluble oligonucleotides, which are then degraded further into small acid-soluble oligonucleotides. In Clostridium perfringens (strain SM101 / Type A), this protein is Exodeoxyribonuclease 7 large subunit.